Here is an 817-residue protein sequence, read N- to C-terminus: LPS-assembly protein LptD (817 aa).

The signal sequence occupies residues 1 to 45 (MDRLPLPHALHVPTHRPFAAPLPPRRLLARLAALMLCGVPLAVLA).

This sequence belongs to the LptD family. In terms of assembly, component of the lipopolysaccharide transport and assembly complex. Interacts with LptE and LptA.

It is found in the cell outer membrane. Together with LptE, is involved in the assembly of lipopolysaccharide (LPS) at the surface of the outer membrane. This chain is LPS-assembly protein LptD, found in Acidovorax sp. (strain JS42).